Consider the following 456-residue polypeptide: Proline-specific permease ProY (456 aa).

The Cytoplasmic segment spans residues 1 to 17 (MESNNKLKRGLSTRHIR). 2 helical membrane-spanning segments follow: residues 18–38 (FMALGSAIGTGLFYGSADAIK) and 39–59 (MAGPSVLLAYIIGGVAAYIIM). Residues 60–95 (RALGEMSVHNPAASSFSRYAQENLGPLAGYITGWTY) lie on the Cytoplasmic side of the membrane. 2 helical membrane-spanning segments follow: residues 96–116 (CFEILIVAIADVTAFGIYMGV) and 117–137 (WFPAVPHWIWVLSVVLIICAI). At 138 to 156 (NLMSVKVFGELEFWFSFFK) the chain is on the cytoplasmic side. A helical membrane pass occupies residues 157–177 (VATIIIMIVAGIGIIVWGIGN). At 178 to 197 (GGQPTGIHNLWSNGGFFSNG) the chain is on the periplasmic side. The helical transmembrane segment at 198 to 218 (WLGMIMSLQMVMFAYGGIEII) threads the bilayer. Residues 219-242 (GITAGEAKDPEKSIPRAINSVPMR) lie on the Cytoplasmic side of the membrane. The helical transmembrane segment at 243-263 (ILVFYVGTLFVIMSIYPWNQV) threads the bilayer. The Periplasmic portion of the chain corresponds to 264 to 277 (GTNGSPFVLTFQHM). The chain crosses the membrane as a helical span at residues 278-298 (GITFAASILNFVVLTASLSAI). The Cytoplasmic segment spans residues 299–331 (NSDVFGVGRMLHGMAEQGSAPKVFAKTSRRGIP). A helical membrane pass occupies residues 332–352 (WVTVLVMTIALLFAVYLNYIM). Over 353-355 (PEN) the chain is Periplasmic. Residues 356-376 (VFLVIASLATFATVWVWIMIL) traverse the membrane as a helical segment. Residues 377–399 (LSQIAFRRRLPPEEVKALKFKVP) lie on the Cytoplasmic side of the membrane. Residues 400–420 (GGVVTTIAGLIFLVFIIALIG) traverse the membrane as a helical segment. Topologically, residues 421-424 (YHPD) are periplasmic. The chain crosses the membrane as a helical span at residues 425 to 445 (TRISLYVGFAWIVLLLIGWIF). The Cytoplasmic segment spans residues 446–456 (KRRRDRQLAQA).

This sequence belongs to the amino acid-polyamine-organocation (APC) superfamily. Amino acid transporter (AAT) (TC 2.A.3.1) family.

Its subcellular location is the cell inner membrane. Its function is as follows. Permease that is involved in the transport across the cytoplasmic membrane of proline. The polypeptide is Proline-specific permease ProY (proY) (Salmonella typhimurium (strain LT2 / SGSC1412 / ATCC 700720)).